A 538-amino-acid chain; its full sequence is Tryptophan 7-halogenase PrnA (538 aa).

The FAD site is built by Gly-13, Thr-15, Ala-16, Ser-39, Ile-42, Ile-45, Glu-49, and Ala-50. The active site involves Lys-79. Residue Lys-79 coordinates 7-chloro-L-tryptophan. FAD is bound by residues Val-187 and Leu-337. Glu-346 is a 7-chloro-L-tryptophan binding site. Residue Glu-346 coordinates L-tryptophan. Residues Thr-348 and Gly-349 each contribute to the chloride site. Ile-350 is an FAD binding site. Residues Tyr-443, Tyr-444, Glu-450, and Phe-454 each coordinate 7-chloro-L-tryptophan. Positions 443, 444, 450, and 454 each coordinate L-tryptophan.

The protein belongs to the flavin-dependent halogenase family. Bacterial tryptophan halogenase subfamily. In terms of assembly, homodimer.

The catalysed reaction is L-tryptophan + FADH2 + chloride + O2 = 7-chloro-L-tryptophan + FAD + 2 H2O. The protein operates within antibiotic biosynthesis. Its function is as follows. Involved in the biosynthesis of the antifungal antibiotic pyrrolnitrin. Catalyzes the chlorination of tryptophan (Trp) at C7 position to yield 7-chloro-L-tryptophan (7-CLT). The chain is Tryptophan 7-halogenase PrnA from Pseudomonas fluorescens.